We begin with the raw amino-acid sequence, 394 residues long: Elongation factor Tu (394 aa).

In terms of domain architecture, tr-type G spans 10–204; that stretch reads KPHVNIGTIG…AVDSYIPQPV (195 aa). The G1 stretch occupies residues 19 to 26; that stretch reads GHVDHGKT. 19 to 26 contributes to the GTP binding site; sequence GHVDHGKT. Threonine 26 serves as a coordination point for Mg(2+). Residues 60-64 form a G2 region; it reads GITIS. The G3 stretch occupies residues 81–84; it reads DCPG. GTP is bound by residues 81-85 and 136-139; these read DCPGH and NKVD. The interval 136–139 is G4; the sequence is NKVD. The tract at residues 174-176 is G5; the sequence is SAL.

It belongs to the TRAFAC class translation factor GTPase superfamily. Classic translation factor GTPase family. EF-Tu/EF-1A subfamily. As to quaternary structure, monomer.

It localises to the cytoplasm. The enzyme catalyses GTP + H2O = GDP + phosphate + H(+). GTP hydrolase that promotes the GTP-dependent binding of aminoacyl-tRNA to the A-site of ribosomes during protein biosynthesis. This Rickettsia canadensis (strain McKiel) protein is Elongation factor Tu.